Reading from the N-terminus, the 173-residue chain is Crossover junction endodeoxyribonuclease RuvC (173 aa).

Residues D8, E67, and D139 contribute to the active site. The Mg(2+) site is built by D8, E67, and D139.

This sequence belongs to the RuvC family. Homodimer which binds Holliday junction (HJ) DNA. The HJ becomes 2-fold symmetrical on binding to RuvC with unstacked arms; it has a different conformation from HJ DNA in complex with RuvA. In the full resolvosome a probable DNA-RuvA(4)-RuvB(12)-RuvC(2) complex forms which resolves the HJ. The cofactor is Mg(2+).

The protein resides in the cytoplasm. It catalyses the reaction Endonucleolytic cleavage at a junction such as a reciprocal single-stranded crossover between two homologous DNA duplexes (Holliday junction).. In terms of biological role, the RuvA-RuvB-RuvC complex processes Holliday junction (HJ) DNA during genetic recombination and DNA repair. Endonuclease that resolves HJ intermediates. Cleaves cruciform DNA by making single-stranded nicks across the HJ at symmetrical positions within the homologous arms, yielding a 5'-phosphate and a 3'-hydroxyl group; requires a central core of homology in the junction. The consensus cleavage sequence is 5'-(A/T)TT(C/G)-3'. Cleavage occurs on the 3'-side of the TT dinucleotide at the point of strand exchange. HJ branch migration catalyzed by RuvA-RuvB allows RuvC to scan DNA until it finds its consensus sequence, where it cleaves and resolves the cruciform DNA. The sequence is that of Crossover junction endodeoxyribonuclease RuvC from Photobacterium profundum (strain SS9).